The sequence spans 630 residues: Probable potassium transport system protein Kup 2 (630 aa).

Helical transmembrane passes span 17 to 37 (FWALTLGGVGVVFGDIGTSPL), 56 to 76 (VIVLGVLSLILWSLFIVVTAK), 108 to 128 (VFLMSLGVIGASMFIGDSMIT), 145 to 165 (PALEHYVVPLTVGILVVLFAF), 176 to 196 (AFGPVMIVWFSTLAVMGLIHI), 214 to 234 (FMLSHGMVGLVTIGAVFLAVT), 255 to 275 (WLFFVLPSLLINYFGQGALVL), 293 to 313 (FLVPLIVLATAATVIASQAVI), 345 to 365 (IYLPRVNMLLLIGVLMLVLLF), 375 to 395 (YGIAVSTTMVADGVMGFVVIW), 402 to 422 (PAAAAALIFPFVAVDAIFFSA), and 427 to 447 (LLEGAWVPLLFGLLMATLIWV).

Belongs to the HAK/KUP transporter (TC 2.A.72) family.

It localises to the cell inner membrane. The enzyme catalyses K(+)(in) + H(+)(in) = K(+)(out) + H(+)(out). In terms of biological role, transport of potassium into the cell. Likely operates as a K(+):H(+) symporter. The sequence is that of Probable potassium transport system protein Kup 2 from Rhodopseudomonas palustris (strain BisB18).